The following is a 122-amino-acid chain: Acidic phospholipase A2 A' (122 aa).

Disulfide bonds link Cys26–Cys115, Cys28–Cys44, Cys43–Cys95, Cys49–Cys122, Cys50–Cys88, Cys57–Cys81, and Cys75–Cys86. The Ca(2+) site is built by Tyr27, Gly29, and Gly31. His47 is a catalytic residue. Asp48 provides a ligand contact to Ca(2+). Asp89 is a catalytic residue.

Belongs to the phospholipase A2 family. Group II subfamily. D49 sub-subfamily. It depends on Ca(2+) as a cofactor. In terms of tissue distribution, expressed by the venom gland.

Its subcellular location is the secreted. The catalysed reaction is a 1,2-diacyl-sn-glycero-3-phosphocholine + H2O = a 1-acyl-sn-glycero-3-phosphocholine + a fatty acid + H(+). Functionally, PLA2 catalyzes the calcium-dependent hydrolysis of the 2-acyl groups in 3-sn-phosphoglycerides. This Gloydius halys (Chinese water mocassin) protein is Acidic phospholipase A2 A'.